Here is a 214-residue protein sequence, read N- to C-terminus: MDKKKNISMAVIRRLPKYHRYLEELLKSDVDRISSKELSEKIGFTASQIRQDLNCFGDFGQQGYGYNVKDLSREVDNILGLTKMYNTIIIGAGNIGQAIANYINFQKMGFDLKAIFDINPKLIGLKIQDVEVRDVDNIDGFLQKNKIDIGIICVPSKNAQKVCDIIVKNNVNGIWNFAPVDLMTPENVIVENVHLSESLLTLSCLLQEVNKSRD.

Residues 17–56 constitute a DNA-binding region (H-T-H motif); it reads KYHRYLEELLKSDVDRISSKELSEKIGFTASQIRQDLNCF. 91–96 serves as a coordination point for NAD(+); the sequence is GAGNIG.

Belongs to the transcriptional regulatory Rex family. As to quaternary structure, homodimer.

It localises to the cytoplasm. In terms of biological role, modulates transcription in response to changes in cellular NADH/NAD(+) redox state. This is Redox-sensing transcriptional repressor Rex from Clostridium acetobutylicum (strain ATCC 824 / DSM 792 / JCM 1419 / IAM 19013 / LMG 5710 / NBRC 13948 / NRRL B-527 / VKM B-1787 / 2291 / W).